A 363-amino-acid polypeptide reads, in one-letter code: Nicotinamide adenine dinucleotide transporter 2, mitochondrial (363 aa).

Solcar repeat units lie at residues 15–107 (REVA…LKDV), 115–203 (LSIG…IKQY), and 215–305 (LSPG…MLRF). The next 6 helical transmembrane spans lie at 21 to 41 (AGAGATAGAIAATFVCPLDVI), 82 to 102 (GLSPTIIALLPNWAVYFSVYG), 121 to 141 (MIAAAGAGAATSIATNPLWVV), 176 to 196 (LYSGILPSLAGVSHVAIQFPA), 215 to 235 (LSPGNVAIASSIAKVIASILT), and 277 to 299 (LYRGCATNLLRTTPSAVITFTTY). The interval 313–363 (ETNRSDDRRREEERKNLVSRRGEEEDKDLGLRESQTQSNKISTPHIPLGSK) is disordered. The segment covering 315–343 (NRSDDRRREEERKNLVSRRGEEEDKDLGL) has biased composition (basic and acidic residues). Positions 345 to 354 (ESQTQSNKIS) are enriched in polar residues.

The protein belongs to the mitochondrial carrier (TC 2.A.29) family. In terms of tissue distribution, highly expressed in young meristematic shoot area, vascular bundles of leaves, developing siliques including the funiculi, petal veins, developing pollen and central cylinder of roots.

The protein localises to the mitochondrion membrane. Inhibited by pyridoxal 5'-phosphate, bathophenanthroline, tannic acid, mersalyl, mercuric chloride, p-hydroxymercuribenzoate, p-hydroxymercuribenzoate sulfonate, bromocresol purple and N-ethylmaleimide. Mediates the NAD(+) import into chloroplast. Favors the NAD(+)(in)/ADP or AMP(out) antiport exchange, but is also able to catalyze a low unidirectional transport (uniport) of NAD(+). Transports NAD(+), nicotinic acid adenine dinucleotide, nicotinamide mononucleotide, nicotinic acid mononucleotide, FAD, FMN, TTP, TDP, TMP, UTP, UDP, UMP, CTP, CDP, CMP, GTP, GDP, GMP, 3'-AMP, ATP, ADP and AMP, has low transport activity with cAMP, NADH and alpha-NAD(+), and has no activity with NADP(+), NADPH, nicotinamide, nicotinic acid, adenosine, thiamine mono- or diphosphate, inorganic phosphate, CoA, folate, NaCl, malate, malonate, citrate, fumarate, aspartate, glutamate, S-adenosylmethionine, lysine, arginine, and ornithine. This chain is Nicotinamide adenine dinucleotide transporter 2, mitochondrial (NDT2), found in Arabidopsis thaliana (Mouse-ear cress).